A 402-amino-acid chain; its full sequence is Propionate kinase (402 aa).

Positions 11 and 18 each coordinate ATP. Residue asparagine 11 coordinates Mg(2+). Substrate is bound at residue arginine 86. Aspartate 143 serves as the catalytic Proton donor/acceptor. ATP-binding positions include histidine 175, 203-207 (HLGNG), 278-280 (DLR), and 326-330 (GIGEN).

This sequence belongs to the acetokinase family. TdcD subfamily. Homodimer. It depends on Mg(2+) as a cofactor.

It catalyses the reaction propanoate + ATP = propanoyl phosphate + ADP. The protein operates within amino-acid degradation; L-threonine degradation via propanoate pathway; propanoate from L-threonine: step 4/4. Catalyzes the conversion of propionyl phosphate and ADP to propionate and ATP. This is Propionate kinase from Edwardsiella piscicida.